Here is a 368-residue protein sequence, read N- to C-terminus: Quinolinate synthase (368 aa).

H46 and S63 together coordinate iminosuccinate. Position 110 (C110) interacts with [4Fe-4S] cluster. Iminosuccinate is bound by residues 141-143 and S162; that span reads YVN. C230 serves as a coordination point for [4Fe-4S] cluster. Iminosuccinate contacts are provided by residues 256–258 and T273; that span reads HPE. A [4Fe-4S] cluster-binding site is contributed by C320.

Belongs to the quinolinate synthase family. Type 3 subfamily. [4Fe-4S] cluster is required as a cofactor.

Its subcellular location is the cytoplasm. It catalyses the reaction iminosuccinate + dihydroxyacetone phosphate = quinolinate + phosphate + 2 H2O + H(+). The protein operates within cofactor biosynthesis; NAD(+) biosynthesis; quinolinate from iminoaspartate: step 1/1. Functionally, catalyzes the condensation of iminoaspartate with dihydroxyacetone phosphate to form quinolinate. This is Quinolinate synthase from Bacillus cereus (strain B4264).